A 1047-amino-acid chain; its full sequence is [F-actin]-monooxygenase MICAL1 (1047 aa).

Positions 1 to 489 (MASPTSTNPA…QDLYDIMDKE (489 aa)) are monooxygenase domain. FAD is bound by residues C95, 114 to 116 (EKR), 121 to 123 (RHN), F181, Y293, and D393. T475 carries the phosphothreonine modification. The Calponin-homology (CH) domain occupies 507–611 (SAGTEELLHW…YLSHFHSAFK (105 aa)). S616 is modified (phosphoserine). Residues 644-672 (RTKVEEETPCTEEPPVSEPSVPPALPSEH) form a disordered region. The span at 659–668 (VSEPSVPPAL) shows a compositional bias: pro residues. One can recognise an LIM zinc-binding domain in the interval 679–741 (DVCELCGKRL…LQHLPQEDQK (63 aa)). C681, C684, H702, C705, C708, C711, C731, and H734 together coordinate Zn(2+). Disordered regions lie at residues 739–787 (DQKE…QPAR) and 849–872 (EKGEEEEEEEEEEEEEEEELPPPL). Residues 745 to 767 (NNGSPENQELPTPGDSTTQSGPS) show a composition bias toward polar residues. 2 positions are modified to phosphoserine: S777 and S781. Over residues 851-868 (GEEEEEEEEEEEEEEEEL) the composition is skewed to acidic residues. Positions 905-1047 (KEEEMKRFCK…EERRLREMPV (143 aa)) constitute a bMERB domain. Residues 912–996 (FCKAQAIQRR…LEEKQRQLDH (85 aa)) adopt a coiled-coil conformation.

The protein belongs to the Mical family. As to quaternary structure, interacts with STK38 and STK38L. Associates with the SH3 domain of NEDD9. Interacts with VIM and PLXNA3. Interacts with RAB1B, RAB8A, RAB10, RAB13 and RAB15 (in their GTP-bound forms); binding to RAB1B is of low affinity compared to other Rab proteins; at least in case of RAB8A and RAB10 can bind 2 molecules of the Rab proteins simultaneously. Interacts with GRAF1/ARHGAP26, GRAF2/ARHGAP10, RAB8A, RAB8B and RAB10; may bind simultaneously to GRAFs and Rabs and connects GRAFs to Rabs. Does not interact with RAB1 and RAB11A. The cofactor is FAD.

Its subcellular location is the cytoplasm. The protein localises to the cytoskeleton. It localises to the endosome membrane. It is found in the midbody. The enzyme catalyses L-methionyl-[F-actin] + NADPH + O2 + H(+) = L-methionyl-(R)-S-oxide-[F-actin] + NADP(+) + H2O. It carries out the reaction NADPH + O2 + H(+) = H2O2 + NADP(+). Monooxygenase that promotes depolymerization of F-actin by mediating oxidation of specific methionine residues on actin to form methionine-sulfoxide, resulting in actin filament disassembly and preventing repolymerization. In the absence of actin, it also functions as a NADPH oxidase producing H(2)O(2). Acts as a cytoskeletal regulator that connects NEDD9 to intermediate filaments. Also acts as a negative regulator of apoptosis via its interaction with STK38 and STK38L; acts by antagonizing STK38 and STK38L activation by MST1/STK4. Involved in regulation of lamina-specific connectivity in the nervous system such as the development of lamina-restricted hippocampal connections. Through redox regulation of the actin cytoskeleton controls the intracellular distribution of secretory vesicles containing L1/neurofascin/NgCAM family proteins in neurons, thereby regulating their cell surface levels. May act as Rab effector protein and play a role in vesicle trafficking. Promotes endosomal tubule extension by associating with RAB8 (RAB8A or RAB8B), RAB10 and GRAF (GRAF1/ARHGAP26 or GRAF2/ARHGAP10) on the endosomal membrane which may connect GRAFs to Rabs, thereby participating in neosynthesized Rab8-Rab10-Rab11-dependent protein export. This is [F-actin]-monooxygenase MICAL1 (Mical1) from Rattus norvegicus (Rat).